Here is an 890-residue protein sequence, read N- to C-terminus: Translation initiation factor IF-2 (890 aa).

Residues 45–304 form a disordered region; sequence LIDHLNQKNS…LQQGFQKPAQ (260 aa). Positions 67–81 are enriched in polar residues; it reads STLNIPGTGGKSKSV. The segment covering 92-217 has biased composition (basic and acidic residues); sequence VKRDPQEAER…RMAEENKWTD (126 aa). The segment covering 252-266 has biased composition (basic residues); the sequence is GRGRNAKAARPKKGN. The span at 267–280 shows a compositional bias: basic and acidic residues; the sequence is KHAESKADREEARA. Residues 389-558 form the tr-type G domain; the sequence is PRAPVVTIMG…LLQAEVLELK (170 aa). Residues 398–405 are G1; that stretch reads GHVDHGKT. 398-405 contacts GTP; sequence GHVDHGKT. The G2 stretch occupies residues 423–427; it reads GITQH. Residues 444–447 are G3; it reads DTPG. GTP-binding positions include 444–448 and 498–501; these read DTPGH and NKID. Residues 498–501 form a G4 region; sequence NKID. The tract at residues 534–536 is G5; the sequence is SAK. Lys-808 bears the N6-acetyllysine mark.

The protein belongs to the TRAFAC class translation factor GTPase superfamily. Classic translation factor GTPase family. IF-2 subfamily.

It localises to the cytoplasm. In terms of biological role, one of the essential components for the initiation of protein synthesis. Protects formylmethionyl-tRNA from spontaneous hydrolysis and promotes its binding to the 30S ribosomal subunits. Also involved in the hydrolysis of GTP during the formation of the 70S ribosomal complex. The polypeptide is Translation initiation factor IF-2 (Shigella sonnei (strain Ss046)).